Here is a 942-residue protein sequence, read N- to C-terminus: Homeobox transcription factor phx1 (942 aa).

Composition is skewed to polar residues over residues 1–19 (MRSYSNPENGGQINDNINY), 61–73 (HLQGEQQNPTNPN), 99–116 (ADNNSFDNVNSSKLTNPS), and 122–135 (IVKSESEPANSKQN). 5 disordered regions span residues 1-54 (MRSY…MQLP), 61-80 (HLQGEQQNPTNPNYFPPEFD), 87-172 (KQEK…KKQR), 604-651 (WANQ…STST), and 892-922 (SSSGGVYASQPGASGYLSHDQSGSPFEDVYS). Residues 142–151 (SVEKAKENVA) show a composition bias toward basic and acidic residues. Residues 153–164 (ESGTPESGGSTS) show a composition bias toward low complexity. The homeobox DNA-binding region spans 164–224 (SAPKSKKQRL…QNRRAKSKLI (61 aa)). 2 stretches are compositionally biased toward polar residues: residues 604 to 614 (WANQLPRQPDS) and 630 to 641 (SHDTSSEYGNKS).

It localises to the nucleus. Its function is as follows. Trnascription factor that regulates the expression of the homocitrate synthase (HCS) lys4. In Schizosaccharomyces pombe (strain 972 / ATCC 24843) (Fission yeast), this protein is Homeobox transcription factor phx1 (phx1).